A 346-amino-acid chain; its full sequence is Eukaryotic translation initiation factor 3 subunit I (346 aa).

WD repeat units follow at residues 8–49 (GHER…GTYH), 50–91 (GHQG…KTWD), 145–184 (CEDSKATVAGWSYLSKYIIAGHEDGSVSQFDGKNGDLLYN), 189–228 (ELNQPITDLQWSHDRTYFITASKDKTSKLITAKDLEVLKT), and 286–325 (GHFGPLNTVAADPTGKSYASGGEDGYVRIHHFDKGYFDFM).

Belongs to the eIF-3 subunit I family. Component of the eukaryotic translation initiation factor 3 (eIF-3) complex.

The protein localises to the cytoplasm. Functionally, component of the eukaryotic translation initiation factor 3 (eIF-3) complex, which is involved in protein synthesis of a specialized repertoire of mRNAs and, together with other initiation factors, stimulates binding of mRNA and methionyl-tRNAi to the 40S ribosome. The eIF-3 complex specifically targets and initiates translation of a subset of mRNAs involved in cell proliferation. The chain is Eukaryotic translation initiation factor 3 subunit I (tif-34) from Neurospora crassa (strain ATCC 24698 / 74-OR23-1A / CBS 708.71 / DSM 1257 / FGSC 987).